Consider the following 705-residue polypeptide: Ribosomal RNA large subunit methyltransferase K/L (705 aa).

The THUMP domain maps to 43 to 154 (LMYQSLMWSR…KDTASIALDL (112 aa)).

The protein belongs to the methyltransferase superfamily. RlmKL family.

Its subcellular location is the cytoplasm. It catalyses the reaction guanosine(2445) in 23S rRNA + S-adenosyl-L-methionine = N(2)-methylguanosine(2445) in 23S rRNA + S-adenosyl-L-homocysteine + H(+). The catalysed reaction is guanosine(2069) in 23S rRNA + S-adenosyl-L-methionine = N(2)-methylguanosine(2069) in 23S rRNA + S-adenosyl-L-homocysteine + H(+). Functionally, specifically methylates the guanine in position 2445 (m2G2445) and the guanine in position 2069 (m7G2069) of 23S rRNA. This is Ribosomal RNA large subunit methyltransferase K/L from Erwinia tasmaniensis (strain DSM 17950 / CFBP 7177 / CIP 109463 / NCPPB 4357 / Et1/99).